Consider the following 597-residue polypeptide: uncharacterized protein (597 aa).

2 helical membrane passes run Leu4 to Val23 and Phe209 to Ile231.

The protein localises to the cell membrane. This is an uncharacterized protein from Archaeoglobus fulgidus (strain ATCC 49558 / DSM 4304 / JCM 9628 / NBRC 100126 / VC-16).